Reading from the N-terminus, the 405-residue chain is 3-isopropylmalate dehydrogenase 2, chloroplastic (405 aa).

A chloroplast-targeting transit peptide spans 1–33; that stretch reads MAAALQTNIRTVKVPATFRAVSKQSLAPFRVRC. Position 70 is a phosphoserine (serine 70). 114–129 lines the NAD(+) pocket; it reads IGGYKWDNNEKHLRPE. Residues arginine 136, arginine 146, and arginine 174 each contribute to the substrate site. Asparagine 234 contacts NAD(+). Aspartate 264 lines the substrate pocket. Aspartate 264 provides a ligand contact to Mg(2+). Position 265 (asparagine 265) interacts with NAD(+). Mg(2+)-binding residues include aspartate 288 and aspartate 292. Position 318–334 (318–334) interacts with NAD(+); sequence EPIHGSAPDIAGQDKAN.

Belongs to the isocitrate and isopropylmalate dehydrogenases family. In terms of assembly, homodimer. The cofactor is Mg(2+). Requires Mn(2+) as cofactor. Expressed at low levels in seedlings, cotyledons, hypocotyls, flowers, roots, pollen, leaves and stems.

Its subcellular location is the plastid. It localises to the chloroplast stroma. The enzyme catalyses (2R,3S)-3-isopropylmalate + NAD(+) = 4-methyl-2-oxopentanoate + CO2 + NADH. It participates in amino-acid biosynthesis; L-leucine biosynthesis; L-leucine from 3-methyl-2-oxobutanoate: step 3/4. With respect to regulation, regulated by a thiol-based redox modification. Functionally, involved in leucine biosynthesis; catalyzes the oxidative decarboxylation step in leucine biosynthesis (primary metabolism). Catalyzes the oxidation of 3-carboxy-2-hydroxy-4-methylpentanoate (3-isopropylmalate, 3-IPM) to 3-carboxy-4-methyl-2-oxopentanoate. The product decarboxylates to 4-methyl-2 oxopentanoate. Required during pollen development and involved in embryo sac development. This Arabidopsis thaliana (Mouse-ear cress) protein is 3-isopropylmalate dehydrogenase 2, chloroplastic.